Reading from the N-terminus, the 394-residue chain is Elongation factor Tu (394 aa).

Residues 10 to 205 (KPHVNIGTIG…VDTWIPLPPR (196 aa)) enclose the tr-type G domain. The interval 19 to 26 (GHVDHGKT) is G1. 19–26 (GHVDHGKT) contacts GTP. Thr26 contacts Mg(2+). The G2 stretch occupies residues 60–64 (GITIN). The tract at residues 81–84 (DCPG) is G3. GTP is bound by residues 81–85 (DCPGH) and 136–139 (NKCD). Residues 136 to 139 (NKCD) form a G4 region. The interval 174 to 176 (SAL) is G5.

The protein belongs to the TRAFAC class translation factor GTPase superfamily. Classic translation factor GTPase family. EF-Tu/EF-1A subfamily. In terms of assembly, monomer.

It is found in the cytoplasm. It carries out the reaction GTP + H2O = GDP + phosphate + H(+). GTP hydrolase that promotes the GTP-dependent binding of aminoacyl-tRNA to the A-site of ribosomes during protein biosynthesis. The polypeptide is Elongation factor Tu (Bacteroides fragilis (strain ATCC 25285 / DSM 2151 / CCUG 4856 / JCM 11019 / LMG 10263 / NCTC 9343 / Onslow / VPI 2553 / EN-2)).